The following is a 375-amino-acid chain: Probable pectin lyase B (375 aa).

A signal peptide spans 1 to 19 (MKYAAFLPTIGALVSQAIA). 2 cysteine pairs are disulfide-bonded: cysteine 82–cysteine 101 and cysteine 91–cysteine 225. Asparagine 128 is a glycosylation site (N-linked (GlcNAc...) asparagine). The active site involves arginine 255. Residues cysteine 321 and cysteine 329 are joined by a disulfide bond.

This sequence belongs to the polysaccharide lyase 1 family.

The protein localises to the secreted. It carries out the reaction Eliminative cleavage of (1-&gt;4)-alpha-D-galacturonan methyl ester to give oligosaccharides with 4-deoxy-6-O-methyl-alpha-D-galact-4-enuronosyl groups at their non-reducing ends.. Its function is as follows. Pectinolytic enzymes consist of four classes of enzymes: pectin lyase, polygalacturonase, pectin methylesterase and rhamnogalacturonase. Among pectinolytic enzymes, pectin lyase is the most important in depolymerization of pectin, since it cleaves internal glycosidic bonds of highly methylated pectins. The sequence is that of Probable pectin lyase B (pelB) from Aspergillus fumigatus (strain CBS 144.89 / FGSC A1163 / CEA10) (Neosartorya fumigata).